A 203-amino-acid chain; its full sequence is Imidazoleglycerol-phosphate dehydratase (203 aa).

This sequence belongs to the imidazoleglycerol-phosphate dehydratase family.

The protein resides in the cytoplasm. The enzyme catalyses D-erythro-1-(imidazol-4-yl)glycerol 3-phosphate = 3-(imidazol-4-yl)-2-oxopropyl phosphate + H2O. It participates in amino-acid biosynthesis; L-histidine biosynthesis; L-histidine from 5-phospho-alpha-D-ribose 1-diphosphate: step 6/9. The protein is Imidazoleglycerol-phosphate dehydratase of Synechococcus sp. (strain RCC307).